Consider the following 421-residue polypeptide: MVEIDPFEMAVQQLERAAQFMDISEEALEWLKRPMRIVEVSVPVEMDDGSVKVFTGFRVQHNWARGPTKGGIRWHPAETLSTVKALATWMTWKVAVVDLPYGGGKGGIIVDPKKLSEREQERLARSYIRAVYDVIGPWTDIPAPDVYTNPKIMAWMMDEYETIMRRKGPAFGVITGKPPGVGGIVARMDATARGAAFTIREAAKALGWDDLKGKTIAIQGYGNAGYYLHKIMSEEFGMKVVAVSDSKGGIYNPDGLPPADEVLKWKKEHGSVKDMPGTQNITNEELLELEVDILAPSAIEGVITKENADNVKAKIVAEVANGPVTPEADEILHEKGILQIPDFLCNAGGVTVSYFEWVQNINGFYWTVEETRKRLDDKMTKAFWDVFNTHKEKNIHMRDAAYVVAVSRVYEAMKHRGWVKK.

Lys-105 is an active-site residue. NAD(+) is bound at residue 220 to 226 (GYGNAGY).

Belongs to the Glu/Leu/Phe/Val dehydrogenases family. Homohexamer.

The protein localises to the cytoplasm. It is found in the chromosome. It carries out the reaction L-glutamate + NAD(+) + H2O = 2-oxoglutarate + NH4(+) + NADH + H(+). The enzyme catalyses L-glutamate + NADP(+) + H2O = 2-oxoglutarate + NH4(+) + NADPH + H(+). The chain is Glutamate dehydrogenase (gdhA) from Thermococcus kodakarensis (strain ATCC BAA-918 / JCM 12380 / KOD1) (Pyrococcus kodakaraensis (strain KOD1)).